The primary structure comprises 416 residues: Adenylosuccinate synthetase (416 aa).

GTP is bound by residues 13-19 and 41-43; these read GDEGKGK and GHT. Residue Asp-14 is the Proton acceptor of the active site. Mg(2+)-binding residues include Asp-14 and Gly-41. Residues 14 to 17, 39 to 42, Thr-126, Arg-140, Gln-220, Thr-235, and Arg-299 contribute to the IMP site; these read DEGK and NAGH. The active-site Proton donor is His-42. 295 to 301 is a substrate binding site; sequence VSTGRKR. GTP-binding positions include Arg-301, 327 to 329, and 405 to 407; these read KLD and STS.

Belongs to the adenylosuccinate synthetase family. As to quaternary structure, homodimer. It depends on Mg(2+) as a cofactor.

It localises to the cytoplasm. The catalysed reaction is IMP + L-aspartate + GTP = N(6)-(1,2-dicarboxyethyl)-AMP + GDP + phosphate + 2 H(+). It functions in the pathway purine metabolism; AMP biosynthesis via de novo pathway; AMP from IMP: step 1/2. Its function is as follows. Plays an important role in the de novo pathway of purine nucleotide biosynthesis. Catalyzes the first committed step in the biosynthesis of AMP from IMP. The polypeptide is Adenylosuccinate synthetase (Campylobacter jejuni subsp. jejuni serotype O:23/36 (strain 81-176)).